We begin with the raw amino-acid sequence, 514 residues long: Lysine--tRNA ligase (514 aa).

Mg(2+)-binding residues include Glu-422 and Glu-429.

It belongs to the class-II aminoacyl-tRNA synthetase family. As to quaternary structure, homodimer. It depends on Mg(2+) as a cofactor.

It is found in the cytoplasm. It carries out the reaction tRNA(Lys) + L-lysine + ATP = L-lysyl-tRNA(Lys) + AMP + diphosphate. This is Lysine--tRNA ligase from Psychrobacter arcticus (strain DSM 17307 / VKM B-2377 / 273-4).